Consider the following 416-residue polypeptide: MLKRDMNIADYDADLFAAIQEETVRQEEHIELIASENYTSPRVMEAQGSQLTNKYAEGYPGKRYYGGCEYVDKVETLAIERACELFGAEYANVQPHSGSQANNAVYMALLNAGDTVLGMSLAHGGHLTHGSPVNFSGKLYNIIPYGIDENGQIDYEEMEALAVEHKPKMIIGGFSAYSQVCDWARMREIADKVGAYFFVDMAHVAGLIAAGVYPNPVPHAHVVTTTTHKTLAGPRGGLILSNEGEDLYKKLNSAVFPGGQGGPLMHVIAGKAVAFKEALEPEFKEYQARVVANAKAMVAEFLARGYNIVSGSTENHLFLVDLIDKDITGKEADAALGSANITVNKNSVPNDPRSPFVTSGIRIGSPSITRRGFTEEDAKNLAGWMCDILDNMGDESVIEATKAKVLEICKRLPVYA.

(6S)-5,6,7,8-tetrahydrofolate-binding positions include L121 and 125-127 (GHL). The residue at position 229 (K229) is an N6-(pyridoxal phosphate)lysine. (6S)-5,6,7,8-tetrahydrofolate-binding positions include E245 and 354 to 356 (SPF).

It belongs to the SHMT family. Homodimer. It depends on pyridoxal 5'-phosphate as a cofactor.

It localises to the cytoplasm. The catalysed reaction is (6R)-5,10-methylene-5,6,7,8-tetrahydrofolate + glycine + H2O = (6S)-5,6,7,8-tetrahydrofolate + L-serine. Its pathway is one-carbon metabolism; tetrahydrofolate interconversion. It functions in the pathway amino-acid biosynthesis; glycine biosynthesis; glycine from L-serine: step 1/1. Functionally, catalyzes the reversible interconversion of serine and glycine with tetrahydrofolate (THF) serving as the one-carbon carrier. This reaction serves as the major source of one-carbon groups required for the biosynthesis of purines, thymidylate, methionine, and other important biomolecules. Also exhibits THF-independent aldolase activity toward beta-hydroxyamino acids, producing glycine and aldehydes, via a retro-aldol mechanism. The polypeptide is Serine hydroxymethyltransferase (Aliivibrio fischeri (strain ATCC 700601 / ES114) (Vibrio fischeri)).